The following is a 576-amino-acid chain: MNEKHPGPLVVSGKLSDGERMKSESNFLRGTIAEDLNNGLTGGFSGDNFLLIRFHGMYQQDDRDIRAERAEQKLEPRHAMMLRCRLPGGIITPQQWLGIDKFAADNTLYGSIRITNRQTFQFHGILKGNVKPAHQLLNELGLDALATANDVNRNVLCTSNPVESALHQEAYEWAKKISEHLLPRTRAYAEIWLDAEKVATTDEEPILGATYLPRKFKTTVVIPPQNDVDLHANDLNFVAVADKGKLIGFNVLVGGGLSIAHGDKNTYPRKASEFGYIPLKHTLAIAEAVVTTQRDWGNRTDRKNAKTKYTLERVGVETFKAEVEKRAGVSFSAIKPYQFTGRGDRIGWVKGVDKKWHLTLFIENGRLLDYPGRSLKTGVAEIAKIHQGDFRLTANQNLIVAGVPEKDKARIEALAREHGLMDDNVTSQRENSMACVSFPTCPLAMAEAERFLPEFVTRVEGILQQHGLADEHIVLRVTGCPNGCGRALLAEVGLVGKAVGRYNLHLGGNREGTRIPRMYRENITADEILLITDQLVGRWAKERHVDEGFGDFVIRAGVIAPVIDSARDFYDVQEAM.

Residues Cys-435, Cys-441, Cys-480, and Cys-484 each contribute to the [4Fe-4S] cluster site. A siroheme-binding site is contributed by Cys-484.

Belongs to the nitrite and sulfite reductase 4Fe-4S domain family. As to quaternary structure, alpha(8)-beta(8). The alpha component is a flavoprotein, the beta component is a hemoprotein. The cofactor is siroheme. It depends on [4Fe-4S] cluster as a cofactor.

The catalysed reaction is hydrogen sulfide + 3 NADP(+) + 3 H2O = sulfite + 3 NADPH + 4 H(+). Its pathway is sulfur metabolism; hydrogen sulfide biosynthesis; hydrogen sulfide from sulfite (NADPH route): step 1/1. In terms of biological role, component of the sulfite reductase complex that catalyzes the 6-electron reduction of sulfite to sulfide. This is one of several activities required for the biosynthesis of L-cysteine from sulfate. This is Sulfite reductase [NADPH] hemoprotein beta-component from Yersinia pseudotuberculosis serotype O:1b (strain IP 31758).